The chain runs to 279 residues: Large ribosomal subunit protein mL46 (279 aa).

An N6-acetyllysine modification is found at Lys230.

It belongs to the mitochondrion-specific ribosomal protein mL46 family. In terms of assembly, component of the mitochondrial large ribosomal subunit (mt-LSU). Mature mammalian 55S mitochondrial ribosomes consist of a small (28S) and a large (39S) subunit. The 28S small subunit contains a 12S ribosomal RNA (12S mt-rRNA) and 30 different proteins. The 39S large subunit contains a 16S rRNA (16S mt-rRNA), a copy of mitochondrial valine transfer RNA (mt-tRNA(Val)), which plays an integral structural role, and 52 different proteins. mL46 is located at the central protuberance.

The protein localises to the mitochondrion. This is Large ribosomal subunit protein mL46 (MRPL46) from Homo sapiens (Human).